The sequence spans 326 residues: Glyceraldehyde-3-phosphate dehydrogenase, cytosolic (326 aa).

NAD(+) contacts are provided by residues 2–3, Asp24, and Arg71; that span reads RI. D-glyceraldehyde 3-phosphate-binding positions include 142 to 144, Thr173, 202 to 203, and Arg225; these read SCT and TG. Cys143 acts as the Nucleophile in catalysis. Position 307 (Asn307) interacts with NAD(+).

Belongs to the glyceraldehyde-3-phosphate dehydrogenase family.

The protein localises to the cytoplasm. The catalysed reaction is D-glyceraldehyde 3-phosphate + phosphate + NAD(+) = (2R)-3-phospho-glyceroyl phosphate + NADH + H(+). It participates in carbohydrate degradation; glycolysis; pyruvate from D-glyceraldehyde 3-phosphate: step 1/5. Its function is as follows. Key enzyme in glycolysis that catalyzes the first step of the pathway by converting D-glyceraldehyde 3-phosphate (G3P) into 3-phospho-D-glyceroyl phosphate. Essential for the maintenance of cellular ATP levels and carbohydrate metabolism. The protein is Glyceraldehyde-3-phosphate dehydrogenase, cytosolic (GAPC) of Nicotiana tabacum (Common tobacco).